We begin with the raw amino-acid sequence, 342 residues long: Heat-inducible transcription repressor HrcA (342 aa).

This sequence belongs to the HrcA family.

Its function is as follows. Negative regulator of class I heat shock genes (grpE-dnaK-dnaJ and groELS operons). Prevents heat-shock induction of these operons. This is Heat-inducible transcription repressor HrcA from Corynebacterium efficiens (strain DSM 44549 / YS-314 / AJ 12310 / JCM 11189 / NBRC 100395).